We begin with the raw amino-acid sequence, 166 residues long: UPF0303 protein Avin_29320 (166 aa).

This sequence belongs to the UPF0303 family.

The sequence is that of UPF0303 protein Avin_29320 from Azotobacter vinelandii (strain DJ / ATCC BAA-1303).